Reading from the N-terminus, the 278-residue chain is Protein saf1 (278 aa).

3 disordered regions span residues 1–43 (MLSK…RNMS), 81–210 (KKNI…DIEE), and 240–264 (QKLA…EDKD). Composition is skewed to basic and acidic residues over residues 22 to 38 (QIKV…ERLS) and 90 to 103 (GRVE…AERQ). Basic residues-rich tracts occupy residues 104–116 (HKPR…KNPK) and 169–183 (REKK…HHKK). A compositionally biased stretch (polar residues) spans 186-202 (INASSAQPKSTTTTEAA).

The protein resides in the nucleus. Its subcellular location is the nucleolus. This chain is Protein saf1 (saf1), found in Schizosaccharomyces pombe (strain 972 / ATCC 24843) (Fission yeast).